Consider the following 1157-residue polypeptide: ATP-dependent helicase/deoxyribonuclease subunit B (1157 aa).

The UvrD-like helicase ATP-binding domain maps to 1 to 277 (MTLQIIAGKS…KLFLENKRAK (277 aa)). Position 8-15 (8-15 (GKSGTGKT)) interacts with ATP. In terms of domain architecture, UvrD-like helicase C-terminal spans 272-578 (ENKRAKSDSL…EFSLLPPSLD (307 aa)). Positions 794, 1115, 1118, and 1124 each coordinate [4Fe-4S] cluster.

This sequence belongs to the helicase family. AddB/RexB type 1 subfamily. In terms of assembly, heterodimer of AddA and AddB. Mg(2+) serves as cofactor. It depends on [4Fe-4S] cluster as a cofactor.

In terms of biological role, the heterodimer acts as both an ATP-dependent DNA helicase and an ATP-dependent, dual-direction single-stranded exonuclease. Recognizes the chi site generating a DNA molecule suitable for the initiation of homologous recombination. The AddB subunit has 5' -&gt; 3' nuclease activity but not helicase activity. The protein is ATP-dependent helicase/deoxyribonuclease subunit B of Listeria welshimeri serovar 6b (strain ATCC 35897 / DSM 20650 / CCUG 15529 / CIP 8149 / NCTC 11857 / SLCC 5334 / V8).